Consider the following 260-residue polypeptide: ARL14 effector protein (260 aa).

N-acetylmethionine is present on methionine 1. Residue lysine 177 forms a Glycyl lysine isopeptide (Lys-Gly) (interchain with G-Cter in SUMO2) linkage. Serine 183 is subject to Phosphoserine.

As to quaternary structure, interacts with ARL14 and MYO1E.

The protein resides in the cytoplasm. Functionally, through its interaction with ARL14 and MYO1E, may connect MHC class II-containing cytoplasmic vesicles to the actin network and hence controls the movement of these vesicles along the actin cytoskeleton in dendritic cells. In Bos taurus (Bovine), this protein is ARL14 effector protein (ARL14EP).